A 664-amino-acid chain; its full sequence is Glycine--tRNA ligase beta subunit (664 aa).

The protein belongs to the class-II aminoacyl-tRNA synthetase family. In terms of assembly, tetramer of two alpha and two beta subunits.

The protein localises to the cytoplasm. The enzyme catalyses tRNA(Gly) + glycine + ATP = glycyl-tRNA(Gly) + AMP + diphosphate. The polypeptide is Glycine--tRNA ligase beta subunit (Rickettsia typhi (strain ATCC VR-144 / Wilmington)).